A 475-amino-acid polypeptide reads, in one-letter code: Ribulose bisphosphate carboxylase large chain (475 aa).

The propeptide occupies 1 to 2; it reads MS. Position 3 is an N-acetylproline (P3). K14 carries the N6,N6,N6-trimethyllysine modification. N123 and T173 together coordinate substrate. The active-site Proton acceptor is the K175. K177 is a binding site for substrate. Mg(2+) contacts are provided by K201, D203, and E204. Residue K201 is modified to N6-carboxylysine. H294 (proton acceptor) is an active-site residue. The substrate site is built by R295, H327, and S379.

This sequence belongs to the RuBisCO large chain family. Type I subfamily. Heterohexadecamer of 8 large chains and 8 small chains; disulfide-linked. The disulfide link is formed within the large subunit homodimers. It depends on Mg(2+) as a cofactor. The disulfide bond which can form in the large chain dimeric partners within the hexadecamer appears to be associated with oxidative stress and protein turnover.

The protein resides in the plastid. It localises to the chloroplast. It carries out the reaction 2 (2R)-3-phosphoglycerate + 2 H(+) = D-ribulose 1,5-bisphosphate + CO2 + H2O. The enzyme catalyses D-ribulose 1,5-bisphosphate + O2 = 2-phosphoglycolate + (2R)-3-phosphoglycerate + 2 H(+). Functionally, ruBisCO catalyzes two reactions: the carboxylation of D-ribulose 1,5-bisphosphate, the primary event in carbon dioxide fixation, as well as the oxidative fragmentation of the pentose substrate in the photorespiration process. Both reactions occur simultaneously and in competition at the same active site. The protein is Ribulose bisphosphate carboxylase large chain of Carica papaya (Papaya).